The following is a 576-amino-acid chain: Putative SPbeta prophage-derived single-strand DNA-specific exonuclease YorK (576 aa).

Y473 is subject to Phosphotyrosine.

The protein belongs to the RecJ family.

In terms of biological role, putative single-stranded-DNA-specific exonuclease. The sequence is that of Putative SPbeta prophage-derived single-strand DNA-specific exonuclease YorK (yorK) from Bacillus subtilis (strain 168).